The primary structure comprises 419 residues: Putative nickel insertion protein (419 aa).

The disordered stretch occupies residues 69–90; it reads HDPSNHPSQNTHHHHHHHTRHL. Positions 79–88 are enriched in basic residues; the sequence is THHHHHHHTR.

This sequence belongs to the LarC family.

The chain is Putative nickel insertion protein from Rippkaea orientalis (strain PCC 8801 / RF-1) (Cyanothece sp. (strain PCC 8801)).